A 249-amino-acid chain; its full sequence is Metallo-beta-lactamase type 2 (249 aa).

Residues 1 to 22 form the signal peptide; that stretch reads MLKKIKISLILALGLTSLQAFG. Zn(2+)-binding residues include histidine 98, histidine 100, aspartate 102, histidine 161, and cysteine 180. Substrate is bound at residue lysine 183. Zn(2+) is bound at residue histidine 222.

The protein belongs to the metallo-beta-lactamase superfamily. Class-B beta-lactamase family. Monomer. It depends on Zn(2+) as a cofactor.

It localises to the periplasm. It catalyses the reaction a beta-lactam + H2O = a substituted beta-amino acid. Its function is as follows. Confers resistance to the different beta-lactams antibiotics (penicillin, cephalosporin and carbapenem) via the hydrolysis of the beta-lactam ring. This chain is Metallo-beta-lactamase type 2 (blaB3), found in Elizabethkingia meningoseptica (Chryseobacterium meningosepticum).